The following is a 118-amino-acid chain: SPbeta prophage-derived uncharacterized protein YoqR (118 aa).

The polypeptide is SPbeta prophage-derived uncharacterized protein YoqR (yoqR) (Bacillus subtilis (strain 168)).